Here is a 309-residue protein sequence, read N- to C-terminus: S-antigen protein (309 aa).

Positions 1-23 (MNRILSVSFYLFFLYLYIYKTYG) are cleaved as a signal peptide. The interval 52–309 (GKGNKYEDLQ…KSIMNMLILM (258 aa)) is disordered. Residues 60 to 86 (LQEEGEGENDDEEHSNSEESDNDEENE) show a composition bias toward acidic residues. A compositionally biased stretch (basic and acidic residues) spans 93–259 (EAPKSDEAEA…DEAEARKSEA (167 aa)). The tract at residues 97–256 (SDEAEALKSD…RKSDEAEARK (160 aa)) is 20 X 8 AA approximate tandem repeats of A-[RL]-K-S-D-E-A-E. 2 tandem repeats follow at residues 257-271 (SEAG…GGPG) and 272-286 (SEAG…GGPG). The 2 X 15 AA tandem repeats of S-E-A-G-T-E-G-P-K-G-T-G-G-P-G stretch occupies residues 257-286 (SEAGTEGPKGTGGPGSEAGTEGPKGTGGPG). The segment covering 263–289 (GPKGTGGPGSEAGTEGPKGTGGPGSGG) has biased composition (gly residues).

The protein localises to the parasitophorous vacuole. In terms of biological role, s antigens are soluble heat-stable proteins present in the sera of some infected individuals. This chain is S-antigen protein, found in Plasmodium falciparum (isolate NF7 / Ghana).